Reading from the N-terminus, the 344-residue chain is Lipase chaperone (344 aa).

A helical transmembrane segment spans residues 14-34; the sequence is AMVYGVVGLAAIAGVAMWSGA.

Belongs to the lipase chaperone family.

The protein resides in the cell inner membrane. Its function is as follows. May be involved in the folding of the extracellular lipase during its passage through the periplasm. In Burkholderia lata (strain ATCC 17760 / DSM 23089 / LMG 22485 / NCIMB 9086 / R18194 / 383), this protein is Lipase chaperone.